Consider the following 352-residue polypeptide: S-adenosylmethionine:tRNA ribosyltransferase-isomerase (352 aa).

Belongs to the QueA family. In terms of assembly, monomer.

The protein localises to the cytoplasm. It carries out the reaction 7-aminomethyl-7-carbaguanosine(34) in tRNA + S-adenosyl-L-methionine = epoxyqueuosine(34) in tRNA + adenine + L-methionine + 2 H(+). It functions in the pathway tRNA modification; tRNA-queuosine biosynthesis. Functionally, transfers and isomerizes the ribose moiety from AdoMet to the 7-aminomethyl group of 7-deazaguanine (preQ1-tRNA) to give epoxyqueuosine (oQ-tRNA). The sequence is that of S-adenosylmethionine:tRNA ribosyltransferase-isomerase from Vibrio cholerae serotype O1 (strain ATCC 39315 / El Tor Inaba N16961).